We begin with the raw amino-acid sequence, 326 residues long: uncharacterized protein (326 aa).

Solcar repeat units follow at residues 20–107 (QDSN…CKKK), 120–219 (LTNT…LREF), and 231–322 (KSNL…VCDS). 6 helical membrane-spanning segments follow: residues 24–40 (IAFLAGGVAGAVSRTVV), 84–104 (GLNCIRIFPYSAVQFVVYEAC), 126–143 (LFSGALCGGCSVVATYPL), 195–213 (VWPTSLGVVPYVALNFAVY), 237–254 (LTIGAISGGVAQTITYPF), and 297–316 (GLAANLFKVVPSTAVSWLVY).

This sequence belongs to the mitochondrial carrier (TC 2.A.29) family.

The protein resides in the mitochondrion inner membrane. This is an uncharacterized protein from Saccharomyces cerevisiae (strain ATCC 204508 / S288c) (Baker's yeast).